The sequence spans 533 residues: CTP synthase (533 aa).

The interval 1–265 is amidoligase domain; sequence MTKFIFVTGG…ARYLVRRLGL (265 aa). Position 13 (serine 13) interacts with CTP. Serine 13 provides a ligand contact to UTP. 14–19 is an ATP binding site; the sequence is GLGKGI. Residue tyrosine 54 coordinates L-glutamine. Residue aspartate 71 coordinates ATP. Aspartate 71 and glutamate 139 together coordinate Mg(2+). CTP is bound by residues 146–148, 186–191, and lysine 222; these read DIE and KTKPTQ. UTP is bound by residues 186-191 and lysine 222; that span reads KTKPTQ. Residues 290 to 532 form the Glutamine amidotransferase type-1 domain; sequence EIAIVGKYVK…VRAARERKYG (243 aa). Glycine 351 provides a ligand contact to L-glutamine. Residue cysteine 378 is the Nucleophile; for glutamine hydrolysis of the active site. L-glutamine-binding positions include 379–382, glutamate 402, and arginine 459; that span reads FGFQ. Active-site residues include histidine 505 and glutamate 507.

Belongs to the CTP synthase family. Homotetramer.

The catalysed reaction is UTP + L-glutamine + ATP + H2O = CTP + L-glutamate + ADP + phosphate + 2 H(+). It catalyses the reaction L-glutamine + H2O = L-glutamate + NH4(+). It carries out the reaction UTP + NH4(+) + ATP = CTP + ADP + phosphate + 2 H(+). The protein operates within pyrimidine metabolism; CTP biosynthesis via de novo pathway; CTP from UDP: step 2/2. With respect to regulation, allosterically activated by GTP, when glutamine is the substrate; GTP has no effect on the reaction when ammonia is the substrate. The allosteric effector GTP functions by stabilizing the protein conformation that binds the tetrahedral intermediate(s) formed during glutamine hydrolysis. Inhibited by the product CTP, via allosteric rather than competitive inhibition. Catalyzes the ATP-dependent amination of UTP to CTP with either L-glutamine or ammonia as the source of nitrogen. Regulates intracellular CTP levels through interactions with the four ribonucleotide triphosphates. The protein is CTP synthase of Thermococcus gammatolerans (strain DSM 15229 / JCM 11827 / EJ3).